We begin with the raw amino-acid sequence, 1072 residues long: DNA-directed RNA polymerase subunit beta (1072 aa).

Belongs to the RNA polymerase beta chain family. In plastids the minimal PEP RNA polymerase catalytic core is composed of four subunits: alpha, beta, beta', and beta''. When a (nuclear-encoded) sigma factor is associated with the core the holoenzyme is formed, which can initiate transcription.

The protein resides in the plastid. It is found in the chloroplast. The enzyme catalyses RNA(n) + a ribonucleoside 5'-triphosphate = RNA(n+1) + diphosphate. Functionally, DNA-dependent RNA polymerase catalyzes the transcription of DNA into RNA using the four ribonucleoside triphosphates as substrates. The protein is DNA-directed RNA polymerase subunit beta of Lobularia maritima (Sweet alyssum).